The primary structure comprises 78 residues: Small ribosomal subunit protein bS18 (78 aa).

Belongs to the bacterial ribosomal protein bS18 family. Part of the 30S ribosomal subunit. Forms a tight heterodimer with protein bS6.

In terms of biological role, binds as a heterodimer with protein bS6 to the central domain of the 16S rRNA, where it helps stabilize the platform of the 30S subunit. The protein is Small ribosomal subunit protein bS18 of Parafrankia sp. (strain EAN1pec).